The primary structure comprises 207 residues: Large ribosomal subunit protein uL4 (207 aa).

The interval 45-89 (RQGTHKVKTRSEVRGGGRKPWRQKGTGRARQGSIRSPQWRGGGTV) is disordered. Basic residues predominate over residues 60-71 (GGRKPWRQKGTG).

Belongs to the universal ribosomal protein uL4 family. Part of the 50S ribosomal subunit.

One of the primary rRNA binding proteins, this protein initially binds near the 5'-end of the 23S rRNA. It is important during the early stages of 50S assembly. It makes multiple contacts with different domains of the 23S rRNA in the assembled 50S subunit and ribosome. Functionally, forms part of the polypeptide exit tunnel. This chain is Large ribosomal subunit protein uL4, found in Bacillus mycoides (strain KBAB4) (Bacillus weihenstephanensis).